A 427-amino-acid chain; its full sequence is Adenylosuccinate synthetase (427 aa).

GTP-binding positions include 13-19 (GDEGKGK) and 41-43 (GHT). The Proton acceptor role is filled by aspartate 14. Positions 14 and 41 each coordinate Mg(2+). IMP contacts are provided by residues 14–17 (DEGK), 39–42 (NAGH), threonine 129, arginine 143, glutamine 224, threonine 239, and arginine 303. Histidine 42 (proton donor) is an active-site residue. Residues 117 to 137 (QEKQRGEESLGTTKRGIGPAY) are disordered. 299–305 (TTTGRPR) is a binding site for substrate. GTP contacts are provided by residues arginine 305, 331-333 (KLD), and 414-416 (GTG).

The protein belongs to the adenylosuccinate synthetase family. Homodimer. It depends on Mg(2+) as a cofactor.

The protein resides in the cytoplasm. The enzyme catalyses IMP + L-aspartate + GTP = N(6)-(1,2-dicarboxyethyl)-AMP + GDP + phosphate + 2 H(+). It participates in purine metabolism; AMP biosynthesis via de novo pathway; AMP from IMP: step 1/2. Functionally, plays an important role in the de novo pathway of purine nucleotide biosynthesis. Catalyzes the first committed step in the biosynthesis of AMP from IMP. The sequence is that of Adenylosuccinate synthetase from Caldicellulosiruptor saccharolyticus (strain ATCC 43494 / DSM 8903 / Tp8T 6331).